The following is a 361-amino-acid chain: D-alanine--D-alanine ligase (361 aa).

Residues 134-344 form the ATP-grasp domain; it reads KLLLKSFDIP…FKDLVDNLID (211 aa). Position 167–222 (167–222) interacts with ATP; the sequence is KEVLGYPVIVKPAVLGSSIGINVAYSENQIESFIKEALKYDLTIVIEKFIEAREIE. Residues aspartate 297, glutamate 311, and asparagine 313 each contribute to the Mg(2+) site.

The protein belongs to the D-alanine--D-alanine ligase family. The cofactor is Mg(2+). It depends on Mn(2+) as a cofactor.

The protein localises to the cytoplasm. The catalysed reaction is 2 D-alanine + ATP = D-alanyl-D-alanine + ADP + phosphate + H(+). Its pathway is cell wall biogenesis; peptidoglycan biosynthesis. Cell wall formation. The protein is D-alanine--D-alanine ligase of Borreliella burgdorferi (strain ATCC 35210 / DSM 4680 / CIP 102532 / B31) (Borrelia burgdorferi).